The chain runs to 84 residues: UPF0457 protein BALH_2270 (84 aa).

This sequence belongs to the UPF0457 family.

This chain is UPF0457 protein BALH_2270, found in Bacillus thuringiensis (strain Al Hakam).